An 85-amino-acid polypeptide reads, in one-letter code: CDC42 small effector protein 2 (85 aa).

S-palmitoyl cysteine attachment occurs at residues C10 and C11. The 14-residue stretch at 29-42 (IGEPTNFVHTAHVG) folds into the CRIB domain.

This sequence belongs to the CDC42SE/SPEC family.

It localises to the cytoplasm. It is found in the cytoskeleton. Its subcellular location is the cell membrane. Functionally, probably involved in the organization of the actin cytoskeleton by acting downstream of CDC42, inducing actin filament assembly. In Danio rerio (Zebrafish), this protein is CDC42 small effector protein 2 (cdc42se2).